Here is a 75-residue protein sequence, read N- to C-terminus: Tetrahydromethanopterin S-methyltransferase subunit F (75 aa).

A helical membrane pass occupies residues 53–73; the sequence is FAGLACGMVFAGVLLVPLLLL.

This sequence belongs to the MtrF family. In terms of assembly, the complex is composed of 8 subunits; MtrA, MtrB, MtrC, MtrD, MtrE, MtrF, MtrG and MtrH.

Its subcellular location is the cell membrane. The enzyme catalyses 5-methyl-5,6,7,8-tetrahydromethanopterin + coenzyme M + 2 Na(+)(in) = 5,6,7,8-tetrahydromethanopterin + methyl-coenzyme M + 2 Na(+)(out). The protein operates within one-carbon metabolism; methanogenesis from CO(2); methyl-coenzyme M from 5,10-methylene-5,6,7,8-tetrahydromethanopterin: step 2/2. Functionally, part of a complex that catalyzes the formation of methyl-coenzyme M and tetrahydromethanopterin from coenzyme M and methyl-tetrahydromethanopterin. This is an energy-conserving, sodium-ion translocating step. This is Tetrahydromethanopterin S-methyltransferase subunit F from Methanopyrus kandleri (strain AV19 / DSM 6324 / JCM 9639 / NBRC 100938).